A 241-amino-acid polypeptide reads, in one-letter code: 6-hydroxymethyl-7,8-dihydropterin pyrophosphokinase (241 aa).

The protein belongs to the archaeal 6-HMPDK family. Mg(2+) is required as a cofactor.

It catalyses the reaction 6-hydroxymethyl-7,8-dihydropterin + ATP = (7,8-dihydropterin-6-yl)methyl diphosphate + AMP + H(+). It functions in the pathway cofactor biosynthesis; 5,6,7,8-tetrahydromethanopterin biosynthesis. Catalyzes the transfer of diphosphate from ATP to 6-hydroxymethyl-7,8-dihydropterin (6-HMD), leading to 6-hydroxymethyl-7,8-dihydropterin diphosphate (6-HMDP). This is 6-hydroxymethyl-7,8-dihydropterin pyrophosphokinase from Methanocaldococcus jannaschii (strain ATCC 43067 / DSM 2661 / JAL-1 / JCM 10045 / NBRC 100440) (Methanococcus jannaschii).